A 400-amino-acid chain; its full sequence is Exodeoxyribonuclease 7 large subunit (400 aa).

The protein belongs to the XseA family. As to quaternary structure, heterooligomer composed of large and small subunits.

Its subcellular location is the cytoplasm. It catalyses the reaction Exonucleolytic cleavage in either 5'- to 3'- or 3'- to 5'-direction to yield nucleoside 5'-phosphates.. In terms of biological role, bidirectionally degrades single-stranded DNA into large acid-insoluble oligonucleotides, which are then degraded further into small acid-soluble oligonucleotides. The polypeptide is Exodeoxyribonuclease 7 large subunit (Clostridium perfringens (strain 13 / Type A)).